A 135-amino-acid polypeptide reads, in one-letter code: ATP synthase epsilon chain (135 aa).

The protein belongs to the ATPase epsilon chain family. In terms of assembly, F-type ATPases have 2 components, CF(1) - the catalytic core - and CF(0) - the membrane proton channel. CF(1) has five subunits: alpha(3), beta(3), gamma(1), delta(1), epsilon(1). CF(0) has three main subunits: a, b and c.

The protein localises to the cell inner membrane. Its function is as follows. Produces ATP from ADP in the presence of a proton gradient across the membrane. The protein is ATP synthase epsilon chain of Mesorhizobium japonicum (strain LMG 29417 / CECT 9101 / MAFF 303099) (Mesorhizobium loti (strain MAFF 303099)).